A 214-amino-acid chain; its full sequence is Probable transaldolase (214 aa).

Lysine 83 (schiff-base intermediate with substrate) is an active-site residue.

Belongs to the transaldolase family. Type 3B subfamily.

The protein localises to the cytoplasm. The enzyme catalyses D-sedoheptulose 7-phosphate + D-glyceraldehyde 3-phosphate = D-erythrose 4-phosphate + beta-D-fructose 6-phosphate. Its pathway is carbohydrate degradation; pentose phosphate pathway; D-glyceraldehyde 3-phosphate and beta-D-fructose 6-phosphate from D-ribose 5-phosphate and D-xylulose 5-phosphate (non-oxidative stage): step 2/3. Transaldolase is important for the balance of metabolites in the pentose-phosphate pathway. This is Probable transaldolase from Clostridium tetani (strain Massachusetts / E88).